The chain runs to 176 residues: Glutathione-regulated potassium-efflux system ancillary protein KefF (176 aa).

Residues His8, 14–17 (SHAN), 65–68 (MQWY), and 105–108 (TTGG) each bind FMN.

This sequence belongs to the NAD(P)H dehydrogenase (quinone) family. KefF subfamily. In terms of assembly, homodimer. Interacts with KefC. FMN is required as a cofactor.

It is found in the cell inner membrane. It carries out the reaction a quinone + NADH + H(+) = a quinol + NAD(+). The catalysed reaction is a quinone + NADPH + H(+) = a quinol + NADP(+). Functionally, regulatory subunit of a potassium efflux system that confers protection against electrophiles. Required for full activity of KefC. Shows redox enzymatic activity, but this enzymatic activity is not required for activation of KefC. This Salmonella dublin (strain CT_02021853) protein is Glutathione-regulated potassium-efflux system ancillary protein KefF.